A 122-amino-acid chain; its full sequence is MIQQESRLKVADNTGAREILCIRVLGGSGRRYAGIGDVIIATVKDALPGAGVKKGDVVKAVVVRTAKERRRPDGSYIKFDENAAVLIKDGGDPRGTRIFGPVGRELREKKFMRIISLAPEVL.

Belongs to the universal ribosomal protein uL14 family. Part of the 50S ribosomal subunit. Forms a cluster with proteins L3 and L19. In the 70S ribosome, L14 and L19 interact and together make contacts with the 16S rRNA in bridges B5 and B8.

Binds to 23S rRNA. Forms part of two intersubunit bridges in the 70S ribosome. The chain is Large ribosomal subunit protein uL14 from Acidothermus cellulolyticus (strain ATCC 43068 / DSM 8971 / 11B).